A 187-amino-acid chain; its full sequence is Elongation factor P (187 aa).

It belongs to the elongation factor P family.

The protein localises to the cytoplasm. Its pathway is protein biosynthesis; polypeptide chain elongation. In terms of biological role, involved in peptide bond synthesis. Stimulates efficient translation and peptide-bond synthesis on native or reconstituted 70S ribosomes in vitro. Probably functions indirectly by altering the affinity of the ribosome for aminoacyl-tRNA, thus increasing their reactivity as acceptors for peptidyl transferase. This Mycolicibacterium smegmatis (strain ATCC 700084 / mc(2)155) (Mycobacterium smegmatis) protein is Elongation factor P.